The sequence spans 78 residues: Large ribosomal subunit protein bL28 (78 aa).

The protein belongs to the bacterial ribosomal protein bL28 family.

This is Large ribosomal subunit protein bL28 from Thiobacillus denitrificans (strain ATCC 25259 / T1).